Here is a 512-residue protein sequence, read N- to C-terminus: D-alanine--D-alanyl carrier protein ligase (512 aa).

152-153 (TS) is an ATP binding site. A D-alanine-binding site is contributed by Asp-199. 294 to 299 (NAYGPT) provides a ligand contact to ATP. Position 303 (Val-303) interacts with D-alanine. ATP is bound by residues Asp-385, 397–400 (YGGR), and Lys-499. Residue Lys-499 coordinates D-alanine.

It belongs to the ATP-dependent AMP-binding enzyme family. DltA subfamily.

The protein localises to the cytoplasm. The catalysed reaction is holo-[D-alanyl-carrier protein] + D-alanine + ATP = D-alanyl-[D-alanyl-carrier protein] + AMP + diphosphate. It participates in cell wall biogenesis; lipoteichoic acid biosynthesis. In terms of biological role, catalyzes the first step in the D-alanylation of lipoteichoic acid (LTA), the activation of D-alanine and its transfer onto the D-alanyl carrier protein (Dcp) DltC. In an ATP-dependent two-step reaction, forms a high energy D-alanyl-AMP intermediate, followed by transfer of the D-alanyl residue as a thiol ester to the phosphopantheinyl prosthetic group of the Dcp. D-alanylation of LTA plays an important role in modulating the properties of the cell wall in Gram-positive bacteria, influencing the net charge of the cell wall. The chain is D-alanine--D-alanyl carrier protein ligase from Streptococcus pyogenes serotype M4 (strain MGAS10750).